The chain runs to 111 residues: Protein GLUTAMINE DUMPER 6 (111 aa).

Over 1 to 16 (MRPTPKVEIWKSPVPY) the chain is Extracellular. Residues 17–37 (LFGGLFLLVLLIALALLSLVC) traverse the membrane as a helical segment. The Cytoplasmic portion of the chain corresponds to 38 to 111 (THQKPSSSSN…NCDNVTVIST (74 aa)). Polar residues predominate over residues 40–49 (QKPSSSSNNN). Positions 40–63 (QKPSSSSNNNHMDEEDDVGDKDAK) are disordered. A VIMAG; degenerate motif is present at residues 75–79 (VILAG).

Belongs to the GLUTAMINE DUMPER 1 (TC 9.B.60) family. Expressed in the vascular tissues.

Its subcellular location is the membrane. In terms of biological role, probable subunit of an amino acid transporter involved in the regulation of the amino acid metabolism. Stimulates amino acid export by activating nonselective amino acid facilitators. In Arabidopsis thaliana (Mouse-ear cress), this protein is Protein GLUTAMINE DUMPER 6 (GDU6).